The chain runs to 179 residues: MSTGSLSDVEDFQDMEMLECDGIKLDPNKEFGISNDSNEESSTCDNGSPKKGRGTSGKRRKASSKKSPLGTINQEGKQVQRNAANARERARMRVLSKAFSRLKTTLPWVPPDTKLSKLDTLRLASSYIAHLRQILANDKYENGYIHPVNLTWPFMVAGKPENDLKEVVSTSRLCGPTAS.

The interval 20 to 86 (CDGIKLDPNK…KQVQRNAANA (67 aa)) is disordered. A compositionally biased stretch (polar residues) spans 34–46 (SNDSNEESSTCDN). Residues 50–64 (KKGRGTSGKRRKASS) show a composition bias toward basic residues. The span at 70–80 (GTINQEGKQVQ) shows a compositional bias: polar residues. The bHLH domain maps to 79–131 (VQRNAANARERARMRVLSKAFSRLKTTLPWVPPDTKLSKLDTLRLASSYIAHL).

As to quaternary structure, efficient DNA binding requires dimerization with another bHLH protein. At the start of neurulation (stage 13), expressed in the pronephros. At tailbud stage (stage 25-28), expression is high in the anterior-most branchial arch and pronephric glomus. At stage 40, staining persists in the glomus and in the epicardium region of the heart, and at stage 42, expression is higher in the glomus than in the kidney tubule or duct. In adults, expression is highest in the rectum and the spleen, with significant expression in the duodenum, heart, kidney, lungs, pancreas, skin, liver and muscle.

Its subcellular location is the nucleus. Functionally, involved in epithelial-mesenchymal interactions in kidney and lung morphogenesis that include epithelial differentiation and branching morphogenesis. The polypeptide is Transcription factor 21 (tcf21) (Xenopus laevis (African clawed frog)).